The sequence spans 297 residues: ATP synthase gamma chain (297 aa).

It belongs to the ATPase gamma chain family. F-type ATPases have 2 components, CF(1) - the catalytic core - and CF(0) - the membrane proton channel. CF(1) has five subunits: alpha(3), beta(3), gamma(1), delta(1), epsilon(1). CF(0) has three main subunits: a, b and c.

The protein localises to the cell membrane. Its function is as follows. Produces ATP from ADP in the presence of a proton gradient across the membrane. The gamma chain is believed to be important in regulating ATPase activity and the flow of protons through the CF(0) complex. This is ATP synthase gamma chain from Micrococcus luteus (strain ATCC 4698 / DSM 20030 / JCM 1464 / CCM 169 / CCUG 5858 / IAM 1056 / NBRC 3333 / NCIMB 9278 / NCTC 2665 / VKM Ac-2230) (Micrococcus lysodeikticus).